Consider the following 268-residue polypeptide: Energy-coupling factor transporter transmembrane protein EcfT (268 aa).

5 helical membrane-spanning segments follow: residues 26-46 (IVTF…TYAW), 72-92 (IFWL…GTPI), 106-126 (ILNA…STIL), 149-169 (IGVP…FVPL), and 247-267 (VAFA…TWLH).

It belongs to the energy-coupling factor EcfT family. Forms a stable energy-coupling factor (ECF) transporter complex composed of 2 membrane-embedded substrate-binding proteins (S component), 2 ATP-binding proteins (A component) and 2 transmembrane proteins (T component). May be able to interact with more than 1 S component at a time.

The protein localises to the cell membrane. In terms of biological role, transmembrane (T) component of an energy-coupling factor (ECF) ABC-transporter complex. Unlike classic ABC transporters this ECF transporter provides the energy necessary to transport a number of different substrates. The sequence is that of Energy-coupling factor transporter transmembrane protein EcfT from Leuconostoc gelidum subsp. gasicomitatum (strain DSM 15947 / CCUG 46042 / CECT 5767 / JCM 12535 / LMG 18811 / NBRC 113245 / TB1-10) (Leuconostoc gasicomitatum).